The sequence spans 76 residues: ATP synthase subunit 9, mitochondrial (76 aa).

Helical transmembrane passes span 14 to 34 and 48 to 68; these read ISTI…AALI and FPFA…CLMV.

The protein belongs to the ATPase C chain family. F-type ATPases have 2 components, CF(1) - the catalytic core - and CF(0) - the membrane proton channel. CF(1) has five subunits: alpha(3), beta(3), gamma(1), delta(1), epsilon(1). CF(0) has three main subunits: a, b and c.

It is found in the mitochondrion membrane. Its function is as follows. Mitochondrial membrane ATP synthase (F(1)F(0) ATP synthase or Complex V) produces ATP from ADP in the presence of a proton gradient across the membrane which is generated by electron transport complexes of the respiratory chain. F-type ATPases consist of two structural domains, F(1) - containing the extramembraneous catalytic core and F(0) - containing the membrane proton channel, linked together by a central stalk and a peripheral stalk. During catalysis, ATP synthesis in the catalytic domain of F(1) is coupled via a rotary mechanism of the central stalk subunits to proton translocation. Part of the complex F(0) domain. A homomeric c-ring of probably 10 subunits is part of the complex rotary element. This is ATP synthase subunit 9, mitochondrial (ATP9) from Cyberlindnera mrakii (Yeast).